A 104-amino-acid polypeptide reads, in one-letter code: AVIToxin-VAR2 (104 aa).

An N-terminal signal peptide occupies residues 1 to 19 (MRSLLCAPLLLLLLSAGES). 5 disulfides stabilise this stretch: cysteine 26–cysteine 38, cysteine 32–cysteine 50, cysteine 37–cysteine 78, cysteine 60–cysteine 86, and cysteine 80–cysteine 96.

It belongs to the AVIT (prokineticin) family. As to expression, expressed by the venom gland.

It localises to the secreted. Potent agonist for both PKR1/PROKR1 and PKR2/PROKR2. Potently contracts gastrointestinal (GI) smooth muscle. The chain is AVIToxin-VAR2 from Varanus varius (Lace monitor lizard).